A 356-amino-acid chain; its full sequence is tRNA N6-adenosine threonylcarbamoyltransferase (356 aa).

Fe cation contacts are provided by His115 and His119. Substrate is bound by residues 138–142 (LVSGG), Asp171, Gly184, and Asn283. Asp311 provides a ligand contact to Fe cation.

Belongs to the KAE1 / TsaD family. Fe(2+) is required as a cofactor.

The protein resides in the cytoplasm. The enzyme catalyses L-threonylcarbamoyladenylate + adenosine(37) in tRNA = N(6)-L-threonylcarbamoyladenosine(37) in tRNA + AMP + H(+). Functionally, required for the formation of a threonylcarbamoyl group on adenosine at position 37 (t(6)A37) in tRNAs that read codons beginning with adenine. Is involved in the transfer of the threonylcarbamoyl moiety of threonylcarbamoyl-AMP (TC-AMP) to the N6 group of A37, together with TsaE and TsaB. TsaD likely plays a direct catalytic role in this reaction. This chain is tRNA N6-adenosine threonylcarbamoyltransferase, found in Prochlorococcus marinus (strain NATL2A).